A 227-amino-acid chain; its full sequence is MAHPVQLGLQDATSPVMEELITFHDHALMAMSLISLLVLYALFSTLTTKLTNTNITDAQEMEIIWTILPAIILVLIALPSLRILYLTDEVNNPSFTIKSIGHQWYWTYEYTDYGGLIFNSYMLPPLFLNPGDLRLLEVDNRVVLPIEAPVRMMITSQDVLHSWTIPTLGLKTDAVPGRLNQTVFTATRPGVYYGQCSEICGANHSFMPIVAELIPLKIFEMGPVFTL.

The Mitochondrial intermembrane portion of the chain corresponds to 1–14 (MAHPVQLGLQDATS). A helical membrane pass occupies residues 15 to 45 (PVMEELITFHDHALMAMSLISLLVLYALFST). The Mitochondrial matrix segment spans residues 46–59 (LTTKLTNTNITDAQ). A helical transmembrane segment spans residues 60–87 (EMEIIWTILPAIILVLIALPSLRILYLT). Residues 88–227 (DEVNNPSFTI…IFEMGPVFTL (140 aa)) lie on the Mitochondrial intermembrane side of the membrane. Cu cation is bound by residues H161, C196, E198, C200, H204, and M207. Mg(2+) is bound at residue E198.

It belongs to the cytochrome c oxidase subunit 2 family. In terms of assembly, component of the cytochrome c oxidase (complex IV, CIV), a multisubunit enzyme composed of 14 subunits. The complex is composed of a catalytic core of 3 subunits MT-CO1, MT-CO2 and MT-CO3, encoded in the mitochondrial DNA, and 11 supernumerary subunits COX4I, COX5A, COX5B, COX6A, COX6B, COX6C, COX7A, COX7B, COX7C, COX8 and NDUFA4, which are encoded in the nuclear genome. The complex exists as a monomer or a dimer and forms supercomplexes (SCs) in the inner mitochondrial membrane with NADH-ubiquinone oxidoreductase (complex I, CI) and ubiquinol-cytochrome c oxidoreductase (cytochrome b-c1 complex, complex III, CIII), resulting in different assemblies (supercomplex SCI(1)III(2)IV(1) and megacomplex MCI(2)III(2)IV(2)). Found in a complex with TMEM177, COA6, COX18, COX20, SCO1 and SCO2. Interacts with TMEM177 in a COX20-dependent manner. Interacts with COX20. Interacts with COX16. It depends on Cu cation as a cofactor.

It localises to the mitochondrion inner membrane. The enzyme catalyses 4 Fe(II)-[cytochrome c] + O2 + 8 H(+)(in) = 4 Fe(III)-[cytochrome c] + 2 H2O + 4 H(+)(out). Functionally, component of the cytochrome c oxidase, the last enzyme in the mitochondrial electron transport chain which drives oxidative phosphorylation. The respiratory chain contains 3 multisubunit complexes succinate dehydrogenase (complex II, CII), ubiquinol-cytochrome c oxidoreductase (cytochrome b-c1 complex, complex III, CIII) and cytochrome c oxidase (complex IV, CIV), that cooperate to transfer electrons derived from NADH and succinate to molecular oxygen, creating an electrochemical gradient over the inner membrane that drives transmembrane transport and the ATP synthase. Cytochrome c oxidase is the component of the respiratory chain that catalyzes the reduction of oxygen to water. Electrons originating from reduced cytochrome c in the intermembrane space (IMS) are transferred via the dinuclear copper A center (CU(A)) of subunit 2 and heme A of subunit 1 to the active site in subunit 1, a binuclear center (BNC) formed by heme A3 and copper B (CU(B)). The BNC reduces molecular oxygen to 2 water molecules using 4 electrons from cytochrome c in the IMS and 4 protons from the mitochondrial matrix. The polypeptide is Cytochrome c oxidase subunit 2 (MT-CO2) (Cercocebus galeritus (Tana river mangabey)).